We begin with the raw amino-acid sequence, 182 residues long: MSKQLNPAVPDQPIVLGKMGSTYGIRGWLRVFSSTENAESIFDYQPWFIQQAGKWQHVELEDWKRHSQDLIIKVKGVDDREAANLLTNCEIIVDSTQLPALEEDDYYWKDLMGCQVVTTTGYELGKIIDMMETGSNDVMLVKANLKDAFGMKERLVPFLHGQVIKKVDLTAQRVEVDWDPGF.

Positions 103–182 constitute a PRC barrel domain; sequence EDDYYWKDLM…RVEVDWDPGF (80 aa).

It belongs to the RimM family. Binds ribosomal protein uS19.

The protein resides in the cytoplasm. In terms of biological role, an accessory protein needed during the final step in the assembly of 30S ribosomal subunit, possibly for assembly of the head region. Essential for efficient processing of 16S rRNA. May be needed both before and after RbfA during the maturation of 16S rRNA. It has affinity for free ribosomal 30S subunits but not for 70S ribosomes. The sequence is that of Ribosome maturation factor RimM from Yersinia pestis (strain Pestoides F).